Here is a 544-residue protein sequence, read N- to C-terminus: Chaperonin GroEL (544 aa).

ATP contacts are provided by residues 30-33, Lys51, 87-91, Gly415, 480-482, and Asp496; these read TLGP, DGTTT, and DAA.

Belongs to the chaperonin (HSP60) family. Forms a cylinder of 14 subunits composed of two heptameric rings stacked back-to-back. Interacts with the co-chaperonin GroES.

Its subcellular location is the cytoplasm. The catalysed reaction is ATP + H2O + a folded polypeptide = ADP + phosphate + an unfolded polypeptide.. Its function is as follows. Together with its co-chaperonin GroES, plays an essential role in assisting protein folding. The GroEL-GroES system forms a nano-cage that allows encapsulation of the non-native substrate proteins and provides a physical environment optimized to promote and accelerate protein folding. The chain is Chaperonin GroEL from Sulfurihydrogenibium sp. (strain YO3AOP1).